Reading from the N-terminus, the 466-residue chain is D-inositol 3-phosphate glycosyltransferase (466 aa).

The segment covering 1–12 (MRPMRAGAGAAG) has biased composition (low complexity). The tract at residues 1–22 (MRPMRAGAGAAGESCKDDGVRP) is disordered. Residue H43 coordinates 1D-myo-inositol 3-phosphate. UDP-N-acetyl-alpha-D-glucosamine contacts are provided by residues 49 to 50 (QP) and G57. 1D-myo-inositol 3-phosphate is bound by residues 54–59 (DAGGMN), K112, Y145, T169, and R189. The UDP-N-acetyl-alpha-D-glucosamine site is built by R263, K268, and Q321. Positions 330, 331, and 333 each coordinate Mg(2+). UDP-N-acetyl-alpha-D-glucosamine contacts are provided by E343 and E351. T357 serves as a coordination point for Mg(2+). The disordered stretch occupies residues 446–466 (VRDPVAARKPRRWTARRGVGA).

This sequence belongs to the glycosyltransferase group 1 family. MshA subfamily. Homodimer.

It catalyses the reaction 1D-myo-inositol 3-phosphate + UDP-N-acetyl-alpha-D-glucosamine = 1D-myo-inositol 2-acetamido-2-deoxy-alpha-D-glucopyranoside 3-phosphate + UDP + H(+). In terms of biological role, catalyzes the transfer of a N-acetyl-glucosamine moiety to 1D-myo-inositol 3-phosphate to produce 1D-myo-inositol 2-acetamido-2-deoxy-glucopyranoside 3-phosphate in the mycothiol biosynthesis pathway. In Mycobacterium marinum (strain ATCC BAA-535 / M), this protein is D-inositol 3-phosphate glycosyltransferase.